Consider the following 164-residue polypeptide: FMN reductase (NADH) RutF (164 aa).

It belongs to the non-flavoprotein flavin reductase family. RutF subfamily.

It carries out the reaction FMNH2 + NAD(+) = FMN + NADH + 2 H(+). In terms of biological role, catalyzes the reduction of FMN to FMNH2 which is used to reduce pyrimidine by RutA via the Rut pathway. In Klebsiella variicola (strain At-22), this protein is FMN reductase (NADH) RutF.